Here is a 616-residue protein sequence, read N- to C-terminus: Probable methyltransferase PMT2 (616 aa).

The Cytoplasmic segment spans residues 1–13; that stretch reads MALKSSSADGKTR. The chain crosses the membrane as a helical; Signal-anchor for type II membrane protein span at residues 14–34; the sequence is SSVQIFIVFSLCCFFYILGAW. Residues 35–616 lie on the Lumenal side of the membrane; the sequence is QRSGFGKGDS…YWVTNSTSTH (582 aa). N-linked (GlcNAc...) asparagine glycosylation is found at asparagine 205 and asparagine 611.

Belongs to the methyltransferase superfamily.

It is found in the golgi apparatus membrane. In Arabidopsis thaliana (Mouse-ear cress), this protein is Probable methyltransferase PMT2.